Consider the following 555-residue polypeptide: Acetyl-coenzyme A thioesterase (555 aa).

The 113-residue stretch at 5–117 (APGEVVMSQA…FSTFVAKPVG (113 aa)) folds into the HotDog ACOT-type 1 domain. Lys33 bears the N6-succinyllysine mark. Residues 53 to 55 (TAS), 82 to 84 (STS), and Arg144 contribute to the CoA site. An N6-succinyllysine mark is found at Lys159 and Lys228. A HotDog ACOT-type 2 domain is found at 179–294 (RGTSVQSIEL…FLIYNAADDK (116 aa)). Residue 234–236 (KFR) coordinates CoA. The 210-residue stretch at 340–549 (CIHWDISKQA…IQFLENPPDD (210 aa)) folds into the START domain.

In terms of assembly, homodimer or homotetramer.

Its subcellular location is the cytoplasm. The protein resides in the cytosol. It carries out the reaction acetyl-CoA + H2O = acetate + CoA + H(+). It catalyses the reaction butanoyl-CoA + H2O = butanoate + CoA + H(+). The enzyme catalyses hexanoyl-CoA + H2O = hexanoate + CoA + H(+). Its pathway is lipid metabolism; fatty acid metabolism. Inhibited by ADP. Active in the presence of ATP. Cold labile, it dissociates into inactive monomers at low temperature. Functionally, catalyzes the hydrolysis of acyl-CoAs into free fatty acids and coenzyme A (CoASH), regulating their respective intracellular levels. Preferentially hydrolyzes acetyl-CoA. The chain is Acetyl-coenzyme A thioesterase (ACOT12) from Homo sapiens (Human).